Reading from the N-terminus, the 528-residue chain is Tyrosine--tRNA ligase, cytoplasmic (528 aa).

L-tyrosine is bound at residue Tyr-39. The 'HIGH' region signature appears at Thr-44–Tyr-52. Positions 166, 170, 173, and 188 each coordinate L-tyrosine. Positions Lys-222–Ser-226 match the 'KMSKS' region motif. The Nuclear localization signal motif lies at Lys-242–Lys-247. A disordered region spans residues Glu-332–Glu-362. One can recognise a tRNA-binding domain in the interval Asp-364–Tyr-468.

The protein belongs to the class-I aminoacyl-tRNA synthetase family. As to quaternary structure, homodimer.

It is found in the cytoplasm. It localises to the nucleus. It carries out the reaction tRNA(Tyr) + L-tyrosine + ATP = L-tyrosyl-tRNA(Tyr) + AMP + diphosphate + H(+). Functionally, catalyzes the attachment of tyrosine to tRNA(Tyr) in a two-step reaction: tyrosine is first activated by ATP to form Tyr-AMP and then transferred to the acceptor end of tRNA(Tyr). The polypeptide is Tyrosine--tRNA ligase, cytoplasmic (yars1) (Xenopus laevis (African clawed frog)).